Consider the following 457-residue polypeptide: tRNA-2-methylthio-N(6)-dimethylallyladenosine synthase (457 aa).

Residues lysine 3–glutamate 120 enclose the MTTase N-terminal domain. Cysteine 12, cysteine 49, cysteine 83, cysteine 157, cysteine 161, and cysteine 164 together coordinate [4Fe-4S] cluster. Positions arginine 143–arginine 377 constitute a Radical SAM core domain. Residues aspartate 380–leucine 447 form the TRAM domain.

It belongs to the methylthiotransferase family. MiaB subfamily. As to quaternary structure, monomer. It depends on [4Fe-4S] cluster as a cofactor.

The protein localises to the cytoplasm. It catalyses the reaction N(6)-dimethylallyladenosine(37) in tRNA + (sulfur carrier)-SH + AH2 + 2 S-adenosyl-L-methionine = 2-methylsulfanyl-N(6)-dimethylallyladenosine(37) in tRNA + (sulfur carrier)-H + 5'-deoxyadenosine + L-methionine + A + S-adenosyl-L-homocysteine + 2 H(+). Catalyzes the methylthiolation of N6-(dimethylallyl)adenosine (i(6)A), leading to the formation of 2-methylthio-N6-(dimethylallyl)adenosine (ms(2)i(6)A) at position 37 in tRNAs that read codons beginning with uridine. The polypeptide is tRNA-2-methylthio-N(6)-dimethylallyladenosine synthase (Paraburkholderia xenovorans (strain LB400)).